We begin with the raw amino-acid sequence, 117 residues long: Large ribosomal subunit protein bL20 (117 aa).

The protein belongs to the bacterial ribosomal protein bL20 family.

Binds directly to 23S ribosomal RNA and is necessary for the in vitro assembly process of the 50S ribosomal subunit. It is not involved in the protein synthesizing functions of that subunit. This Trichlorobacter lovleyi (strain ATCC BAA-1151 / DSM 17278 / SZ) (Geobacter lovleyi) protein is Large ribosomal subunit protein bL20.